A 220-amino-acid polypeptide reads, in one-letter code: MDIQLSGIGMTSARTRDRLVQRLRDAGIQDERVLDAIRNTPRHLFIEEALAHQAYDDTALPIGHGQTISQPWVVARMTELLIAKGKPRKVLEIGTGCGYQTAVLAPFCDELYSVERIRPLQDLARKRLLQLGLAKVQLKHADGGFGWTAEAPFDAILAACARVDIPEGLLSQLADGGRLVMPVGGDRQQVLTVVDRDGDQFRSQTLDSVRFVPFQRGVLR.

Serine 69 is a catalytic residue.

It belongs to the methyltransferase superfamily. L-isoaspartyl/D-aspartyl protein methyltransferase family.

It is found in the cytoplasm. It carries out the reaction [protein]-L-isoaspartate + S-adenosyl-L-methionine = [protein]-L-isoaspartate alpha-methyl ester + S-adenosyl-L-homocysteine. Functionally, catalyzes the methyl esterification of L-isoaspartyl residues in peptides and proteins that result from spontaneous decomposition of normal L-aspartyl and L-asparaginyl residues. It plays a role in the repair and/or degradation of damaged proteins. The sequence is that of Protein-L-isoaspartate O-methyltransferase from Alcanivorax borkumensis (strain ATCC 700651 / DSM 11573 / NCIMB 13689 / SK2).